Here is a 185-residue protein sequence, read N- to C-terminus: Ribosome-recycling factor (185 aa).

The protein belongs to the RRF family.

The protein resides in the cytoplasm. Responsible for the release of ribosomes from messenger RNA at the termination of protein biosynthesis. May increase the efficiency of translation by recycling ribosomes from one round of translation to another. In Carboxydothermus hydrogenoformans (strain ATCC BAA-161 / DSM 6008 / Z-2901), this protein is Ribosome-recycling factor.